Reading from the N-terminus, the 173-residue chain is Large ribosomal subunit protein uL16 (173 aa).

Belongs to the universal ribosomal protein uL16 family.

This chain is Large ribosomal subunit protein uL16, found in Methanosarcina acetivorans (strain ATCC 35395 / DSM 2834 / JCM 12185 / C2A).